A 956-amino-acid chain; its full sequence is F-box only protein 10 (956 aa).

Residues 1–48 (MEAGGLPLELWRMILAYLHLPDLGRCSLVCRAWYELILSLDSTRWRQL) enclose the F-box domain. PbH1 repeat units follow at residues 198–217 (SGHV…QVHG) and 238–260 (VPLC…TVEG). The interval 314–367 (EGSQSPTSPASSSPKPGSKAGSQEAEVGSDGERVAQTPDSSDGGLSPSGEDEDE) is disordered. Composition is skewed to low complexity over residues 316-336 (SQSP…AGSQ) and 351-361 (PDSSDGGLSPS). Residues serine 321 and serine 326 each carry the phosphoserine modification. 15 PbH1 repeats span residues 427–448 (VQGC…FVCS), 449–470 (HGRA…RCIH), 471–493 (NSKI…FLRL), 494–516 (EGGG…DIRK), 538–560 (LGNG…GIYI), 561–583 (LYHG…GIAV), 584–606 (NENG…GVDI), 607–629 (RRGG…GVVV), 630–652 (GDEG…GVWM), 653–675 (MSSS…GVAV), 717–739 (RPIT…GLYV), 740–762 (QSSE…GITV), 764–786 (QSSQ…GVKV), 787–809 (EAQC…GIIT), and 832–854 (LPRS…GIAV).

Component of the SCF(FBXO10) complex consisting of CUL1, SKP1 and FBXO10. Interacts with BCL2. Interacts with PRDM1.

The protein localises to the cytoplasm. Its pathway is protein modification; protein ubiquitination. Functionally, substrate-recognition component of the SCF (SKP1-CUL1-F-box protein)-type E3 ubiquitin ligase complex. Mediates the ubiquitination and degradation of BCL2, an antiapoptotic protein, thereby playing a role in apoptosis by controlling the stability of BCL2. Targets also the receptor for advanced glycation end products RAGE for ubiquitination and subsequent lysosomal degradation. Directly controls HGAL/GCSAM ubiquitination and degradation and thereby decreases BCR signaling. The sequence is that of F-box only protein 10 (FBXO10) from Homo sapiens (Human).